Reading from the N-terminus, the 352-residue chain is Protein RecA (352 aa).

67–74 (GPESSGKT) serves as a coordination point for ATP.

This sequence belongs to the RecA family.

The protein localises to the cytoplasm. Functionally, can catalyze the hydrolysis of ATP in the presence of single-stranded DNA, the ATP-dependent uptake of single-stranded DNA by duplex DNA, and the ATP-dependent hybridization of homologous single-stranded DNAs. It interacts with LexA causing its activation and leading to its autocatalytic cleavage. This Aggregatibacter actinomycetemcomitans (Actinobacillus actinomycetemcomitans) protein is Protein RecA.